The primary structure comprises 1852 residues: Chitin synthase csmA (1852 aa).

Residues 1-20 are disordered; sequence MVGTLPAGHTPSHVQSSLPS. The 787-residue stretch at 1 to 787 folds into the Myosin motor domain; sequence MVGTLPAGHT…CWADLAKVGE (787 aa). Asn58 carries N-linked (GlcNAc...) asparagine glycosylation. 102 to 109 is an ATP binding site; that stretch reads GESGAGKT. The interval 599 to 646 is disordered; sequence SSKPLRMPSMARRKTSPASRLTFDATPAEDPYETESQTGSSAKNSSAK. N-linked (GlcNAc...) asparagine glycosylation occurs at Asn642. The actin-binding stretch occupies residues 667–691; the sequence is LDIVNKCLTSGNLNPYFVFCLKPND. A glycan (N-linked (GlcNAc...) asparagine) is linked at Asn840. The next 2 helical transmembrane spans lie at 895–915 and 930–950; these read WMAI…RYIG and FAIN…IVGF. The Cytochrome b5 heme-binding domain maps to 958–1017; the sequence is QHVYSPAELSSHDGKDGHSSYTSIRGLVLDLGEFMDSHYPGIVPDSALKKYAGVDSTALF. N-linked (GlcNAc...) asparagine glycosylation is found at Asn1044 and Asn1195. Residues 1205–1225 form a helical membrane-spanning segment; that stretch reads FILAISVLICSVIVFKFFAAL. N-linked (GlcNAc...) asparagine glycosylation is found at Asn1428, Asn1462, and Asn1568. 3 consecutive transmembrane segments (helical) span residues 1600–1620, 1626–1646, and 1653–1673; these read ISTI…VWLV, IPWT…IIFI, and MIGW…ALPL. Positions 1794 to 1849 constitute a DEK-C domain; sequence LPSDDAILSEIRDILRTADLMTVTKKNIKQELERRFGVNLDAKRPYINSATEAVLS.

This sequence in the N-terminal section; belongs to the TRAFAC class myosin-kinesin ATPase superfamily. Myosin family. The protein in the C-terminal section; belongs to the chitin synthase family. Class V subfamily. Binds F-actin via its N-terminal myosin motor-like domain (MMD). Interacts with kibesin kinA.

It localises to the cell membrane. The protein resides in the cell septum. Its subcellular location is the cell tip. It catalyses the reaction [(1-&gt;4)-N-acetyl-beta-D-glucosaminyl](n) + UDP-N-acetyl-alpha-D-glucosamine = [(1-&gt;4)-N-acetyl-beta-D-glucosaminyl](n+1) + UDP + H(+). Functionally, polymerizes chitin, a structural polymer of the cell wall and septum, by transferring the sugar moiety of UDP-GlcNAc to the non-reducing end of the growing chitin polymer. Plays an important role in polarized hyphal cell wall synthesis and maintenance of cell wall integrity. Its role in growth and morphogenesis is particularly important under low osmotic conditions. The sequence is that of Chitin synthase csmA from Emericella nidulans (Aspergillus nidulans).